The sequence spans 186 residues: Holliday junction branch migration complex subunit RuvA (186 aa).

The interval methionine 1–asparagine 61 is domain I. The domain II stretch occupies residues aspartate 62–lysine 134. A flexible linker region spans residues lysine 134–isoleucine 135. Residues isoleucine 136–isoleucine 186 form a domain III region.

The protein belongs to the RuvA family. In terms of assembly, homotetramer. Forms an RuvA(8)-RuvB(12)-Holliday junction (HJ) complex. HJ DNA is sandwiched between 2 RuvA tetramers; dsDNA enters through RuvA and exits via RuvB. An RuvB hexamer assembles on each DNA strand where it exits the tetramer. Each RuvB hexamer is contacted by two RuvA subunits (via domain III) on 2 adjacent RuvB subunits; this complex drives branch migration. In the full resolvosome a probable DNA-RuvA(4)-RuvB(12)-RuvC(2) complex forms which resolves the HJ.

The protein localises to the cytoplasm. In terms of biological role, the RuvA-RuvB-RuvC complex processes Holliday junction (HJ) DNA during genetic recombination and DNA repair, while the RuvA-RuvB complex plays an important role in the rescue of blocked DNA replication forks via replication fork reversal (RFR). RuvA specifically binds to HJ cruciform DNA, conferring on it an open structure. The RuvB hexamer acts as an ATP-dependent pump, pulling dsDNA into and through the RuvAB complex. HJ branch migration allows RuvC to scan DNA until it finds its consensus sequence, where it cleaves and resolves the cruciform DNA. The sequence is that of Holliday junction branch migration complex subunit RuvA from Phytoplasma mali (strain AT).